The chain runs to 413 residues: MAAFQKIKVANPIVEMDGDEMTRVIWKSIKDKLILPFLELDIKYYDLGLPYRDETDDKVTIESAEATLKYNVAIKCATITPDEARVKEFGLKSMWKSPNGTIRNILNGTVFREPILCKNIPRLVPGWTKAICIGRHAFGDQYRATDTVIKGAGKLKLVFVPEGQGEETEFEVFNFTGEGGVSLAMYNTDESIRSFAEASMATALEKKWPLYLSTKNTILKKYDGRFKDIFQEVYEASWKSKFEAAGIWYEHRLIDDMVAYALKSEGGYVWACKNYDGDVQSDFLAQGFGSLGLMTSVLVCPDGKTIEAEAAHGTVTRHFRVHQKGGETSTNSIASIFAWTRGLAHRAKLDDNAKLLDFTEKLEAACIGVVEAGKMTKDLALILHGSKLSREHYLNTEEFIDAVAAELSARLSA.

Residues 78–80 (TIT) and R85 contribute to the NADP(+) site. Position 80 (T80) interacts with substrate. Substrate contacts are provided by residues 97-103 (SPNGTIR), R112, R135, and K215. D255 contacts Mn(2+). K263 is a binding site for NADP(+). Mn(2+) is bound by residues D278 and D282. NADP(+) is bound by residues 313–318 (GTVTRH) and N331.

It belongs to the isocitrate and isopropylmalate dehydrogenases family. As to quaternary structure, heterodimer. Requires Mg(2+) as cofactor. Mn(2+) serves as cofactor. As to expression, leaves, nodules and roots with the relative amount of 1:3.4:7.7.

It is found in the cytoplasm. It carries out the reaction D-threo-isocitrate + NADP(+) = 2-oxoglutarate + CO2 + NADPH. Its function is as follows. May supply 2-oxoglutarate for amino acid biosynthesis and ammonia assimilation via the glutamine synthetase/glutamate synthase (GS/GOGAT) pathway. The chain is Isocitrate dehydrogenase [NADP] (IDH1) from Glycine max (Soybean).